The sequence spans 373 residues: Anhydro-N-acetylmuramic acid kinase (373 aa).

13–20 is a binding site for ATP; it reads GTSMDGID.

This sequence belongs to the anhydro-N-acetylmuramic acid kinase family.

The enzyme catalyses 1,6-anhydro-N-acetyl-beta-muramate + ATP + H2O = N-acetyl-D-muramate 6-phosphate + ADP + H(+). It functions in the pathway amino-sugar metabolism; 1,6-anhydro-N-acetylmuramate degradation. It participates in cell wall biogenesis; peptidoglycan recycling. Catalyzes the specific phosphorylation of 1,6-anhydro-N-acetylmuramic acid (anhMurNAc) with the simultaneous cleavage of the 1,6-anhydro ring, generating MurNAc-6-P. Is required for the utilization of anhMurNAc either imported from the medium or derived from its own cell wall murein, and thus plays a role in cell wall recycling. This is Anhydro-N-acetylmuramic acid kinase from Brucella suis (strain ATCC 23445 / NCTC 10510).